Reading from the N-terminus, the 527-residue chain is Laccase-5 (527 aa).

The N-terminal stretch at 1-23 (MGKFHSFVNVVALSLSLSGRVFG) is a signal peptide. Residues 25-150 (IGPVTDLTIS…DGLRGPLVVY (126 aa)) form the Plastocyanin-like 1 domain. 2 N-linked (GlcNAc...) asparagine glycosylation sites follow: asparagine 74 and asparagine 77. The Cu cation site is built by histidine 87, histidine 89, histidine 132, and histidine 134. 2 cysteine pairs are disulfide-bonded: cysteine 108-cysteine 516 and cysteine 140-cysteine 230. Asparagine 156, asparagine 209, asparagine 233, asparagine 242, asparagine 276, asparagine 317, asparagine 358, asparagine 366, asparagine 393, and asparagine 402 each carry an N-linked (GlcNAc...) asparagine glycan. Residues 162–306 (VDDDTTVITL…GGVNSAILRY (145 aa)) form the Plastocyanin-like 2 domain. One can recognise a Plastocyanin-like 3 domain in the interval 373–498 (TVPVLLQILS…AGFAIVFAED (126 aa)). 7 residues coordinate Cu cation: histidine 425, histidine 428, histidine 430, histidine 480, cysteine 481, histidine 482, and histidine 486.

The protein belongs to the multicopper oxidase family. Cu cation serves as cofactor.

The protein resides in the secreted. The catalysed reaction is 4 hydroquinone + O2 = 4 benzosemiquinone + 2 H2O. Functionally, lignin degradation and detoxification of lignin-derived products. This is Laccase-5 (LCC5) from Trametes versicolor (White-rot fungus).